Consider the following 562-residue polypeptide: Laccase-2 (562 aa).

Residues methionine 1 to alanine 26 form the signal peptide. 2 consecutive Plastocyanin-like domains span residues aspartate 34 to glycine 150 and aspartate 160 to valine 312. Residues asparagine 39, asparagine 53, asparagine 72, and asparagine 80 are each glycosylated (N-linked (GlcNAc...) asparagine). 2 residues coordinate Cu cation: histidine 84 and histidine 86. N-linked (GlcNAc...) asparagine glycosylation occurs at asparagine 118. Cu cation contacts are provided by histidine 129 and histidine 131. Residues asparagine 189, asparagine 244, asparagine 300, asparagine 328, asparagine 376, asparagine 386, asparagine 421, and asparagine 445 are each glycosylated (N-linked (GlcNAc...) asparagine). Residues aspartate 411–serine 546 enclose the Plastocyanin-like 3 domain. The Cu cation site is built by histidine 463, histidine 466, histidine 468, histidine 525, cysteine 526, histidine 527, and histidine 531.

The protein belongs to the multicopper oxidase family. Cu cation is required as a cofactor.

It is found in the secreted. The protein localises to the extracellular space. Its subcellular location is the apoplast. It carries out the reaction 4 hydroquinone + O2 = 4 benzosemiquinone + 2 H2O. Its function is as follows. Lignin degradation and detoxification of lignin-derived products. The sequence is that of Laccase-2 (LAC2) from Oryza sativa subsp. japonica (Rice).